The chain runs to 211 residues: Redox-sensing transcriptional repressor Rex (211 aa).

Residues 17 to 56 (LYYRLVSILKGKGIDRVNSKTISEALQIDSATIRRDFSYF) constitute a DNA-binding region (H-T-H motif). 91–96 (GIGNLG) lines the NAD(+) pocket.

Belongs to the transcriptional regulatory Rex family. Homodimer.

Its subcellular location is the cytoplasm. Modulates transcription in response to changes in cellular NADH/NAD(+) redox state. This is Redox-sensing transcriptional repressor Rex from Staphylococcus epidermidis (strain ATCC 12228 / FDA PCI 1200).